Reading from the N-terminus, the 238-residue chain is Large ribosomal subunit protein uL2 (238 aa).

Positions 198–238 are disordered; the sequence is HPHGGGLHQSVSRPSTVSRNAPPGRKVGHIASRRTGRRGGA. A compositionally biased stretch (polar residues) spans 206 to 216; the sequence is QSVSRPSTVSR. Positions 223 to 238 are enriched in basic residues; it reads KVGHIASRRTGRRGGA.

This sequence belongs to the universal ribosomal protein uL2 family. In terms of assembly, part of the 50S ribosomal subunit. Forms a bridge to the 30S subunit in the 70S ribosome.

Its function is as follows. One of the primary rRNA binding proteins. Required for association of the 30S and 50S subunits to form the 70S ribosome, for tRNA binding and peptide bond formation. It has been suggested to have peptidyltransferase activity; this is somewhat controversial. Makes several contacts with the 16S rRNA in the 70S ribosome. The chain is Large ribosomal subunit protein uL2 from Sulfolobus acidocaldarius (strain ATCC 33909 / DSM 639 / JCM 8929 / NBRC 15157 / NCIMB 11770).